The primary structure comprises 201 residues: NADH-ubiquinone oxidoreductase chain 6 (201 aa).

5 consecutive transmembrane segments (helical) span residues 4-24 (LVLF…VISV), 28-48 (VFSV…LLLL), 55-75 (LLFL…VVMI), 88-108 (FYYA…IFII), and 151-171 (LFIL…ILTL).

This sequence belongs to the complex I subunit 6 family.

Its subcellular location is the mitochondrion membrane. The catalysed reaction is a ubiquinone + NADH + 5 H(+)(in) = a ubiquinol + NAD(+) + 4 H(+)(out). Its function is as follows. Core subunit of the mitochondrial membrane respiratory chain NADH dehydrogenase (Complex I) that is believed to belong to the minimal assembly required for catalysis. Complex I functions in the transfer of electrons from NADH to the respiratory chain. The immediate electron acceptor for the enzyme is believed to be ubiquinone. This chain is NADH-ubiquinone oxidoreductase chain 6 (ND6), found in Cyanidium caldarium (Red alga).